The following is a 242-amino-acid chain: Biosynthetic peptidoglycan transglycosylase (242 aa).

A helical membrane pass occupies residues 19 to 39 (ILAALAVFWGGGIALFSVVPV).

Belongs to the glycosyltransferase 51 family.

The protein resides in the cell inner membrane. It catalyses the reaction [GlcNAc-(1-&gt;4)-Mur2Ac(oyl-L-Ala-gamma-D-Glu-L-Lys-D-Ala-D-Ala)](n)-di-trans,octa-cis-undecaprenyl diphosphate + beta-D-GlcNAc-(1-&gt;4)-Mur2Ac(oyl-L-Ala-gamma-D-Glu-L-Lys-D-Ala-D-Ala)-di-trans,octa-cis-undecaprenyl diphosphate = [GlcNAc-(1-&gt;4)-Mur2Ac(oyl-L-Ala-gamma-D-Glu-L-Lys-D-Ala-D-Ala)](n+1)-di-trans,octa-cis-undecaprenyl diphosphate + di-trans,octa-cis-undecaprenyl diphosphate + H(+). It participates in cell wall biogenesis; peptidoglycan biosynthesis. Peptidoglycan polymerase that catalyzes glycan chain elongation from lipid-linked precursors. This chain is Biosynthetic peptidoglycan transglycosylase, found in Salmonella agona (strain SL483).